The primary structure comprises 339 residues: NADH-quinone oxidoreductase subunit H (339 aa).

Transmembrane regions (helical) follow at residues 7–27, 77–97, 112–132, 149–169, 180–200, 235–255, 276–296, and 315–335; these read LFWI…AVAY, VLFV…WAVI, LLYI…AGWA, VVSY…AAGS, AGGI…VYWI, VFFL…AVMF, VPGV…YLWF, and VLIP…VTGF.

It belongs to the complex I subunit 1 family. NDH-1 is composed of 14 different subunits. Subunits NuoA, H, J, K, L, M, N constitute the membrane sector of the complex.

It is found in the cell inner membrane. The enzyme catalyses a quinone + NADH + 5 H(+)(in) = a quinol + NAD(+) + 4 H(+)(out). Functionally, NDH-1 shuttles electrons from NADH, via FMN and iron-sulfur (Fe-S) centers, to quinones in the respiratory chain. The immediate electron acceptor for the enzyme in this species is believed to be ubiquinone. Couples the redox reaction to proton translocation (for every two electrons transferred, four hydrogen ions are translocated across the cytoplasmic membrane), and thus conserves the redox energy in a proton gradient. This subunit may bind ubiquinone. The protein is NADH-quinone oxidoreductase subunit H of Alkalilimnicola ehrlichii (strain ATCC BAA-1101 / DSM 17681 / MLHE-1).